The primary structure comprises 429 residues: UPF0761 membrane protein ABO_1543 (429 aa).

6 helical membrane passes run Leu-45–Leu-65, Leu-102–Glu-122, Leu-141–Ile-161, Trp-184–Val-204, Leu-216–Ile-236, and Leu-256–Val-278.

Belongs to the UPF0761 family.

The protein localises to the cell inner membrane. In Alcanivorax borkumensis (strain ATCC 700651 / DSM 11573 / NCIMB 13689 / SK2), this protein is UPF0761 membrane protein ABO_1543.